We begin with the raw amino-acid sequence, 414 residues long: MMSTPETATEATAPEAAPAPSLGADAPAPLPSLIGLDRDKLGAALDAIGVRGSDRRMRVNQLWHWIYLRGATDFAEMTNVSKHLRADLAAAYSLARPEIVMEQVSQDGTRKWLLRFPADHPGERPHDIETVYIPESDRGTLCVSSQVGCTLNCSFCHTGTQRLVRNLTAAEIVAQVMVARDRLGDYPGRDRATGPGLPTEGDRLVTNIVFMGMGEPLYAYDSVKEAIETLSDGDGLGLGKRRITVSTSGVVPEIERLGAEVGPMLAISLHAVRDKLRDELVPINKKYPIAELMEACRTYPAASNAKRITFEYVMLKGVNDSPADARALVKLLEGVPAKINLIPFNPWPGTQYECSDWETIERFSDIVFRAGYASPVRTPRGRDILAACGQLKSESEKLSARERLALRAMMAQDE.

Residues Met1 to Pro20 are compositionally biased toward low complexity. The segment at Met1–Ala24 is disordered. Glu129 acts as the Proton acceptor in catalysis. Residues Glu135–Leu385 form the Radical SAM core domain. Cys142 and Cys388 are disulfide-bonded. Positions 149, 153, and 156 each coordinate [4Fe-4S] cluster. S-adenosyl-L-methionine is bound by residues Gly214–Glu215, Ser246, Ser268–His270, and Asn345. The S-methylcysteine intermediate role is filled by Cys388.

The protein belongs to the radical SAM superfamily. RlmN family. It depends on [4Fe-4S] cluster as a cofactor.

The protein resides in the cytoplasm. It catalyses the reaction adenosine(2503) in 23S rRNA + 2 reduced [2Fe-2S]-[ferredoxin] + 2 S-adenosyl-L-methionine = 2-methyladenosine(2503) in 23S rRNA + 5'-deoxyadenosine + L-methionine + 2 oxidized [2Fe-2S]-[ferredoxin] + S-adenosyl-L-homocysteine. It carries out the reaction adenosine(37) in tRNA + 2 reduced [2Fe-2S]-[ferredoxin] + 2 S-adenosyl-L-methionine = 2-methyladenosine(37) in tRNA + 5'-deoxyadenosine + L-methionine + 2 oxidized [2Fe-2S]-[ferredoxin] + S-adenosyl-L-homocysteine. Functionally, specifically methylates position 2 of adenine 2503 in 23S rRNA and position 2 of adenine 37 in tRNAs. m2A2503 modification seems to play a crucial role in the proofreading step occurring at the peptidyl transferase center and thus would serve to optimize ribosomal fidelity. The protein is Dual-specificity RNA methyltransferase RlmN of Xanthobacter autotrophicus (strain ATCC BAA-1158 / Py2).